Here is a 323-residue protein sequence, read N- to C-terminus: Lipoyl synthase (323 aa).

Residues cysteine 53, cysteine 58, cysteine 64, cysteine 79, cysteine 83, cysteine 86, and serine 293 each coordinate [4Fe-4S] cluster. The Radical SAM core domain occupies tryptophan 65–serine 282.

This sequence belongs to the radical SAM superfamily. Lipoyl synthase family. The cofactor is [4Fe-4S] cluster.

The protein localises to the cytoplasm. The enzyme catalyses [[Fe-S] cluster scaffold protein carrying a second [4Fe-4S](2+) cluster] + N(6)-octanoyl-L-lysyl-[protein] + 2 oxidized [2Fe-2S]-[ferredoxin] + 2 S-adenosyl-L-methionine + 4 H(+) = [[Fe-S] cluster scaffold protein] + N(6)-[(R)-dihydrolipoyl]-L-lysyl-[protein] + 4 Fe(3+) + 2 hydrogen sulfide + 2 5'-deoxyadenosine + 2 L-methionine + 2 reduced [2Fe-2S]-[ferredoxin]. The protein operates within protein modification; protein lipoylation via endogenous pathway; protein N(6)-(lipoyl)lysine from octanoyl-[acyl-carrier-protein]: step 2/2. Catalyzes the radical-mediated insertion of two sulfur atoms into the C-6 and C-8 positions of the octanoyl moiety bound to the lipoyl domains of lipoate-dependent enzymes, thereby converting the octanoylated domains into lipoylated derivatives. This is Lipoyl synthase from Zymomonas mobilis subsp. mobilis (strain ATCC 31821 / ZM4 / CP4).